We begin with the raw amino-acid sequence, 398 residues long: Putative tyrosine-protein phosphatase C15H7.3 (398 aa).

Residues 1 to 15 (MERSQKSARKKKKTS) show a composition bias toward basic residues. The tract at residues 1–114 (MERSQKSARK…EPWSEEEPAK (114 aa)) is disordered. Positions 18–40 (GNDRSIRSERKSKQKKPAGEKSQ) are enriched in basic and acidic residues. Positions 41 to 50 (KSRRTRKSRG) are enriched in basic residues. The span at 55 to 73 (GFTSRETIQPSSSGQSEGT) shows a compositional bias: polar residues. Residues 74-114 (TRMDDQKDEKKDDKKEEKKEERKEEKKEEVKEPWSEEEPAK) are compositionally biased toward basic and acidic residues. The Tyrosine-protein phosphatase domain maps to 125-376 (TNVGGTFKQT…GTVHRSMACW (252 aa)).

This sequence belongs to the protein-tyrosine phosphatase family. Non-receptor class subfamily.

The enzyme catalyses O-phospho-L-tyrosyl-[protein] + H2O = L-tyrosyl-[protein] + phosphate. This Caenorhabditis elegans protein is Putative tyrosine-protein phosphatase C15H7.3.